Consider the following 100-residue polypeptide: MIYEKILLKVLLGPHISEKSSTLSGNFSTVIIKVSICATKLEIKRAVQNMFNVAVKNVNTLVVQGKCKRKKSRITCSSNWKKAYVTLKRGQNINFIGSSE.

This sequence belongs to the universal ribosomal protein uL23 family. Part of the 50S ribosomal subunit. Contacts protein L29, and trigger factor when it is bound to the ribosome.

In terms of biological role, one of the early assembly proteins it binds 23S rRNA. One of the proteins that surrounds the polypeptide exit tunnel on the outside of the ribosome. Forms the main docking site for trigger factor binding to the ribosome. The chain is Large ribosomal subunit protein uL23 from Buchnera aphidicola subsp. Baizongia pistaciae (strain Bp).